The following is a 194-amino-acid chain: IMP cyclohydrolase (194 aa).

It belongs to the archaeal IMP cyclohydrolase family.

The catalysed reaction is IMP + H2O = 5-formamido-1-(5-phospho-D-ribosyl)imidazole-4-carboxamide. The protein operates within purine metabolism; IMP biosynthesis via de novo pathway; IMP from 5-formamido-1-(5-phospho-D-ribosyl)imidazole-4-carboxamide: step 1/1. In terms of biological role, catalyzes the cyclization of 5-formylamidoimidazole-4-carboxamide ribonucleotide to IMP. This is IMP cyclohydrolase from Halobacterium salinarum (strain ATCC 29341 / DSM 671 / R1).